The chain runs to 100 residues: NADH-quinone oxidoreductase subunit K (100 aa).

Helical transmembrane passes span 4 to 24, 28 to 48, and 60 to 80; these read LQHGLILAAILFVLGLTGLVI, LLFMLIGLEIMINASALAFVV, and VMYILAISLAAAEASIGLALL.

It belongs to the complex I subunit 4L family. NDH-1 is composed of 13 different subunits. Subunits NuoA, H, J, K, L, M, N constitute the membrane sector of the complex.

It is found in the cell inner membrane. It catalyses the reaction a quinone + NADH + 5 H(+)(in) = a quinol + NAD(+) + 4 H(+)(out). NDH-1 shuttles electrons from NADH, via FMN and iron-sulfur (Fe-S) centers, to quinones in the respiratory chain. The immediate electron acceptor for the enzyme in this species is believed to be ubiquinone. Couples the redox reaction to proton translocation (for every two electrons transferred, four hydrogen ions are translocated across the cytoplasmic membrane), and thus conserves the redox energy in a proton gradient. This is NADH-quinone oxidoreductase subunit K from Citrobacter koseri (strain ATCC BAA-895 / CDC 4225-83 / SGSC4696).